Consider the following 722-residue polypeptide: Cellulose synthase-like protein G2 (722 aa).

2 helical membrane-spanning segments follow: residues 25–45 and 51–71; these read IYAV…VHSI and TLIT…WATT. Active-site residues include aspartate 139 and aspartate 437. Helical transmembrane passes span 514–534, 548–568, 583–605, 635–655, 660–680, and 702–722; these read FWPF…VALI, FWLY…DFLL, WMVR…TLNL, PSSS…LAFM, GIFT…FAVV, and ICFL…FFLK.

This sequence belongs to the glycosyltransferase 2 family. Plant cellulose synthase-like G subfamily. As to expression, expressed in young seedlings, primarily in the vascular tissue.

Its subcellular location is the golgi apparatus membrane. In terms of biological role, thought to be a Golgi-localized beta-glycan synthase that polymerize the backbones of noncellulosic polysaccharides (hemicelluloses) of plant cell wall. The protein is Cellulose synthase-like protein G2 (CSLG2) of Arabidopsis thaliana (Mouse-ear cress).